Reading from the N-terminus, the 416-residue chain is MKLELSRVVQGCRLGVLTGLGKSGQHSLEVPGCLLHTRCATVPHLTQDTLLTLSDLPAVTQVSVDSLAEHHEVLEEFKEGVRKFAGLHDTVIFCSLHDSASPSPAGHVTNKTVSVWGSGGRIELTAARFMSIQAAVQPDCYQSMADGETWQANTSRKRVRKAVDRTLAHLDECLVLHQKTQELKHAEIFGVVEGGDILEERLRSARETAKRPVGGFVLDGFHSSAMDQDVRAQLIQETSAELPQEKPRLVLGVGRPDEVISCVEAGVDLFESFFPFQVTERGCALSFNYTIDPDPETAGTSASTVLECNGETPEVKKPSANEDVENMTPFEINLKDKRYRDDFRPLVEGCVCYCCQKHMRAYVHHLLVTNELLAGVLLMLHNMAHYLGFFKALRDAITSDRLQDFKNTVLHRRQGD.

Zn(2+) is bound by residues Cys350, Cys352, Cys355, and His381.

The protein belongs to the queuine tRNA-ribosyltransferase family. QTRT2 subfamily. In terms of assembly, heterodimer of a catalytic subunit qtrt1 and an accessory subunit qtrt2. Zn(2+) serves as cofactor.

The protein localises to the cytoplasm. Its subcellular location is the mitochondrion outer membrane. Functionally, non-catalytic subunit of the queuine tRNA-ribosyltransferase (TGT) that catalyzes the base-exchange of a guanine (G) residue with queuine (Q) at position 34 (anticodon wobble position) in tRNAs with GU(N) anticodons (tRNA-Asp, -Asn, -His and -Tyr), resulting in the hypermodified nucleoside queuosine (7-(((4,5-cis-dihydroxy-2-cyclopenten-1-yl)amino)methyl)-7-deazaguanosine). The sequence is that of Queuine tRNA-ribosyltransferase accessory subunit 2 from Danio rerio (Zebrafish).